Consider the following 540-residue polypeptide: Amino acid transporter AVT1B (540 aa).

Residues 1-11 (MNHSTSDQSLY) are compositionally biased toward polar residues. The interval 1 to 55 (MNHSTSDQSLYIESDDGDDERKHLSDDEDDDGTLSDTSDAYNQNQHHLSKASPYS) is disordered. The next 11 helical transmembrane spans lie at 155–175 (AVLN…PYAV), 180–200 (WLGL…GLLL), 227–247 (ILVS…YIIL), 273–293 (LFAL…DLSV), 297–317 (ISAG…WVGL), 332–352 (LATL…HGVF), 367–387 (AVLL…AVMG), 412–432 (IALW…LSPV), 452–474 (IAIR…FFGL), 478–500 (LIGS…LSIL), and 511–531 (ICIL…YSAL).

Belongs to the amino acid/polyamine transporter 2 family. Amino acid/auxin permease (AAAP) (TC 2.A.18.5) subfamily.

It localises to the membrane. This chain is Amino acid transporter AVT1B, found in Arabidopsis thaliana (Mouse-ear cress).